A 302-amino-acid chain; its full sequence is Sulfate adenylyltransferase subunit 2 (302 aa).

Belongs to the PAPS reductase family. CysD subfamily. Heterodimer composed of CysD, the smaller subunit, and CysN.

It carries out the reaction sulfate + ATP + H(+) = adenosine 5'-phosphosulfate + diphosphate. It functions in the pathway sulfur metabolism; hydrogen sulfide biosynthesis; sulfite from sulfate: step 1/3. Functionally, with CysN forms the ATP sulfurylase (ATPS) that catalyzes the adenylation of sulfate producing adenosine 5'-phosphosulfate (APS) and diphosphate, the first enzymatic step in sulfur assimilation pathway. APS synthesis involves the formation of a high-energy phosphoric-sulfuric acid anhydride bond driven by GTP hydrolysis by CysN coupled to ATP hydrolysis by CysD. The polypeptide is Sulfate adenylyltransferase subunit 2 (Xanthomonas axonopodis pv. citri (strain 306)).